The primary structure comprises 488 residues: GlcNAc-binding protein A (488 aa).

Residues 1 to 24 (MIMIITKKTLLPVTLALFSSGVMA) form the signal peptide. The 178-residue stretch at 25–202 (HGYVSSVEGG…SFYNVIDVMF (178 aa)) folds into the Chitin-binding type-4 domain. Residues 439–480 (AGSKVLATDGRIYECKPFPYSGYCIQWSPSATQFEPGVGSDW) enclose the Chitin-binding type-3 domain.

This sequence belongs to the GbpA family.

The protein localises to the secreted. Probably interacts with GlcNAc residues. May promote attachment to both epithelial cell surfaces and chitin. This is GlcNAc-binding protein A from Photobacterium profundum (strain SS9).